We begin with the raw amino-acid sequence, 427 residues long: UPF0229 protein bll6755 (427 aa).

The interval 86–107 is disordered; it reads DYLQRSGQGSAKDSGPGEGDSE.

The protein belongs to the UPF0229 family.

The chain is UPF0229 protein bll6755 from Bradyrhizobium diazoefficiens (strain JCM 10833 / BCRC 13528 / IAM 13628 / NBRC 14792 / USDA 110).